Here is a 118-residue protein sequence, read N- to C-terminus: Large ribosomal subunit protein bL20 (118 aa).

Belongs to the bacterial ribosomal protein bL20 family.

Functionally, binds directly to 23S ribosomal RNA and is necessary for the in vitro assembly process of the 50S ribosomal subunit. It is not involved in the protein synthesizing functions of that subunit. The polypeptide is Large ribosomal subunit protein bL20 (Thermus thermophilus (strain ATCC BAA-163 / DSM 7039 / HB27)).